The sequence spans 440 residues: Probable exopolygalacturonase C (440 aa).

The signal sequence occupies residues 1–19 (MSVFKASFLFLLSSSLVHG). N82 and N99 each carry an N-linked (GlcNAc...) asparagine glycan. PbH1 repeat units lie at residues 215-236 (GTNIQITDSIMYNGDDAIAVGA), 238-259 (SHDTLFTRNTIGYQTHGMSIGS), and 265-288 (TDFANISNIRFDDVTVVDGLYAAR). D229 functions as the Proton donor in the catalytic mechanism. Residue H253 is part of the active site. N-linked (GlcNAc...) asparagine glycosylation is found at N269, N301, N311, and N334. C387 and C393 are oxidised to a cystine. N-linked (GlcNAc...) asparagine glycosylation is found at N417 and N432.

The protein belongs to the glycosyl hydrolase 28 family.

The protein localises to the secreted. It carries out the reaction [(1-&gt;4)-alpha-D-galacturonosyl](n) + H2O = alpha-D-galacturonate + [(1-&gt;4)-alpha-D-galacturonosyl](n-1). In terms of biological role, specific in hydrolyzing the terminal glycosidic bond of polygalacturonic acid and oligogalacturonates. This is Probable exopolygalacturonase C (pgxC) from Aspergillus niger (strain ATCC MYA-4892 / CBS 513.88 / FGSC A1513).